An 89-amino-acid chain; its full sequence is Small ribosomal subunit protein uS15 (89 aa).

It belongs to the universal ribosomal protein uS15 family. In terms of assembly, part of the 30S ribosomal subunit. Forms a bridge to the 50S subunit in the 70S ribosome, contacting the 23S rRNA.

In terms of biological role, one of the primary rRNA binding proteins, it binds directly to 16S rRNA where it helps nucleate assembly of the platform of the 30S subunit by binding and bridging several RNA helices of the 16S rRNA. Its function is as follows. Forms an intersubunit bridge (bridge B4) with the 23S rRNA of the 50S subunit in the ribosome. In Gluconobacter oxydans (strain 621H) (Gluconobacter suboxydans), this protein is Small ribosomal subunit protein uS15.